The sequence spans 257 residues: Tryptophan synthase alpha chain (257 aa).

Residues Glu51 and Asp62 each act as proton acceptor in the active site.

It belongs to the TrpA family. As to quaternary structure, tetramer of two alpha and two beta chains.

The catalysed reaction is (1S,2R)-1-C-(indol-3-yl)glycerol 3-phosphate + L-serine = D-glyceraldehyde 3-phosphate + L-tryptophan + H2O. It functions in the pathway amino-acid biosynthesis; L-tryptophan biosynthesis; L-tryptophan from chorismate: step 5/5. Its function is as follows. The alpha subunit is responsible for the aldol cleavage of indoleglycerol phosphate to indole and glyceraldehyde 3-phosphate. The protein is Tryptophan synthase alpha chain of Nitratidesulfovibrio vulgaris (strain DP4) (Desulfovibrio vulgaris).